We begin with the raw amino-acid sequence, 405 residues long: MIVMTNSAAPHLLPVFARSDLGFERGEGCWLIATNGDRYLDFTSGVAVNALGHAHPALVKALQEQATKLWHMSNLFQSPDGEKLATRLCNESFADFVFFCNSGAEALEGVIKLVRHHHFSKGHPERYRIITFEGAFHGRTLATLAATGSAKYLEGFGPPMDGFDQVPHGDIEAVKKAIGPQTAGILIEPIQGEGGVRSATPAFLKALRQLCDEKGLLLAFDEVQTGMGRTGDLFAHRRTGVTPDVMSLAKALGGGFPIGAILATADAAAGMGPGSHGSTFGGNPLAIAAANAVLDVMLKPGFFDHVQKMSLLLKQKLASVIDRHGDVVSEVRGEGLLIGIKAVVPSGDLVAALRNEKLLTVGAGDNVVRFLPPLIVTEAEIEDSVGRLERACAAISSSQTKRAAS.

Pyridoxal 5'-phosphate-binding positions include 103 to 104 (GA) and Phe-136. Arg-139 lines the N(2)-acetyl-L-ornithine pocket. 221-224 (DEVQ) serves as a coordination point for pyridoxal 5'-phosphate. Lys-250 carries the post-translational modification N6-(pyridoxal phosphate)lysine. Ser-278 provides a ligand contact to N(2)-acetyl-L-ornithine. Thr-279 provides a ligand contact to pyridoxal 5'-phosphate.

The protein belongs to the class-III pyridoxal-phosphate-dependent aminotransferase family. ArgD subfamily. In terms of assembly, homodimer. It depends on pyridoxal 5'-phosphate as a cofactor.

It localises to the cytoplasm. The enzyme catalyses N(2)-acetyl-L-ornithine + 2-oxoglutarate = N-acetyl-L-glutamate 5-semialdehyde + L-glutamate. The protein operates within amino-acid biosynthesis; L-arginine biosynthesis; N(2)-acetyl-L-ornithine from L-glutamate: step 4/4. The chain is Acetylornithine aminotransferase 1 from Bradyrhizobium diazoefficiens (strain JCM 10833 / BCRC 13528 / IAM 13628 / NBRC 14792 / USDA 110).